The primary structure comprises 175 residues: Pre-mRNA-splicing factor SNT309 (175 aa).

As to quaternary structure, belongs to the NTC complex (or PRP19-associated complex), composed of at least CEF1, CLF1, ISY1, NTC20, SNT309, SYF1, SYF2, and PRP19. The NTC complex associates with the spliceosome after the release of the U1 and U4 snRNAs and forms the CWC spliceosome subcomplex (or CEF1-associated complex) reminiscent of a late-stage spliceosome composed also of the U2, U5 and U6 snRNAs and at least BUD13, BUD31, BRR2, CDC40, CUS1, CWC2, CWC15, CWC21, CWC22, CWC23, CWC24, CWC25, CWC27, ECM2, HSH155, IST3, LEA1, MSL1, PRP8, PRP9, PRP11, PRP21, PRP22, PRP45, PRP46, SLU7, SMB1, SMD1, SMD2, SMD3, SMX2, SMX3, SNU114, SPP2, RSE1 and YJU2. Interacts with PRP19.

The protein localises to the nucleus. Its function is as follows. Involved in pre-mRNA splicing by stabilizing the NTC (or PRP19-associated complex). As a component of the NTC complex, associates to the spliceosome to mediate conformational rearrangement or to stabilize the structure of the spliceosome after U4 snRNA dissociation, which leads to spliceosome maturation. The sequence is that of Pre-mRNA-splicing factor SNT309 (SNT309) from Saccharomyces cerevisiae (strain ATCC 204508 / S288c) (Baker's yeast).